Consider the following 417-residue polypeptide: F-box protein At3g07870 (417 aa).

Positions 22 to 68 (GGGLESLPEDIIADIFSRLPISSIARLMFVCRSWRSVLTQHGRLSSS) constitute an F-box domain.

The protein is F-box protein At3g07870 of Arabidopsis thaliana (Mouse-ear cress).